We begin with the raw amino-acid sequence, 155 residues long: Small ribosomal subunit protein uS7c (155 aa).

The protein belongs to the universal ribosomal protein uS7 family. As to quaternary structure, part of the 30S ribosomal subunit.

Its subcellular location is the plastid. It is found in the chloroplast. Its function is as follows. One of the primary rRNA binding proteins, it binds directly to 16S rRNA where it nucleates assembly of the head domain of the 30S subunit. The polypeptide is Small ribosomal subunit protein uS7c (rps7) (Yucca glauca (Soapweed yucca)).